Here is a 93-residue protein sequence, read N- to C-terminus: Cytochrome c oxidase polypeptide 6, mitochondrial (93 aa).

Residues 2 to 33 (STGNESYNLRYPKGFKGYPYNMYKLEGYGTPK) are Mitochondrial matrix-facing. A helical membrane pass occupies residues 34 to 53 (GYITLIGVVATLTVSGLFFA). Topologically, residues 54 to 93 (KTRSNKREYPTHNKEWRAKTLAYAKETNADPIYQLPKDKI) are mitochondrial intermembrane.

The protein belongs to the cytochrome c oxidase IV family. Component of the cytochrome c oxidase (complex IV, CIV), a multisubunit enzyme composed of a catalytic core of 3 subunits and seevral supernumerary subunits. The complex exists as a monomer or a dimer and forms supercomplexes (SCs) in the inner mitochondrial membrane with ubiquinol-cytochrome c oxidoreductase (cytochrome b-c1 complex, complex III, CIII).

It is found in the mitochondrion inner membrane. It functions in the pathway energy metabolism; oxidative phosphorylation. Functionally, component of the cytochrome c oxidase, the last enzyme in the mitochondrial electron transport chain which drives oxidative phosphorylation. The respiratory chain contains 3 multisubunit complexes succinate dehydrogenase (complex II, CII), ubiquinol-cytochrome c oxidoreductase (cytochrome b-c1 complex, complex III, CIII) and cytochrome c oxidase (complex IV, CIV), that cooperate to transfer electrons derived from NADH and succinate to molecular oxygen, creating an electrochemical gradient over the inner membrane that drives transmembrane transport and the ATP synthase. Cytochrome c oxidase is the component of the respiratory chain that catalyzes the reduction of oxygen to water. Electrons originating from reduced cytochrome c in the intermembrane space (IMS) are transferred via the dinuclear copper A center (CU(A)) of subunit 2 and heme A of subunit 1 to the active site in subunit 1, a binuclear center (BNC) formed by heme A3 and copper B (CU(B)). The BNC reduces molecular oxygen to 2 water molecules using 4 electrons from cytochrome c in the IMS and 4 protons from the mitochondrial matrix. The chain is Cytochrome c oxidase polypeptide 6, mitochondrial (cxfA) from Dictyostelium discoideum (Social amoeba).